The chain runs to 831 residues: DNA ligase (831 aa).

NAD(+) contacts are provided by residues 34–38, 83–84, and E114; these read DADYD and SL. Catalysis depends on K116, which acts as the N6-AMP-lysine intermediate. Residues R137, E174, K291, and K315 each contribute to the NAD(+) site. Residues C409, C412, C427, and C433 each contribute to the Zn(2+) site. Residues 749–831 enclose the BRCT domain; that stretch reads AHTAPLNGQS…LAFLGQYSAQ (83 aa).

It belongs to the NAD-dependent DNA ligase family. LigA subfamily. The cofactor is Mg(2+). Mn(2+) serves as cofactor.

It catalyses the reaction NAD(+) + (deoxyribonucleotide)n-3'-hydroxyl + 5'-phospho-(deoxyribonucleotide)m = (deoxyribonucleotide)n+m + AMP + beta-nicotinamide D-nucleotide.. Its function is as follows. DNA ligase that catalyzes the formation of phosphodiester linkages between 5'-phosphoryl and 3'-hydroxyl groups in double-stranded DNA using NAD as a coenzyme and as the energy source for the reaction. It is essential for DNA replication and repair of damaged DNA. The sequence is that of DNA ligase from Xylella fastidiosa (strain 9a5c).